A 474-amino-acid polypeptide reads, in one-letter code: MADMQNLVERLERAVGRLEAVSHTSDMHCGYGDSPSKGAVPYVQAFDSLLANPVAEYLKMSKEIGGDVQKHAEMVHTGLKLERALLATASQCQQPAGNKLSDLLAPISEQIQEVITFREKNRGSKFFNHLSAVSESIQALGWVALAAKPGPFVKEMNDAAMFYTNRVLKEYRDVDKKHVDWVRAYLSIWTELQAYIKEFHTTGLAWSKTGPVAKELSGLPSGPSVGSGPPPPPPGPPPPPISTSSGSDDSASRSALFAQINQGESITHALKHVSDDMKTHKNPALKAQSGPVRSGPKPFSAPKPQTSPSPKPATKKEPALLELEGKKWRVENQENVSNLVIDDTELKQVAYIYKCVNTTLQIKGKINSITVDNCKKLGLVFDDVVGIVEIINSRDVKVQVMGKVPTISINKTDGCHAYLSKNSLDCEIVSAKSSEMNVLIPTEGGDFNEFPVPEQFKTLWNGQKLVTTVTEIAG.

Ala-2 is subject to N-acetylalanine. At Tyr-31 the chain carries Phosphotyrosine. Ser-34 is modified (phosphoserine). Lys-80 is subject to N6-acetyllysine. Disordered regions lie at residues 215–253 (ELSG…SASR) and 277–316 (MKTH…ATKK). Residues 217–227 (SGLPSGPSVGS) show a composition bias toward low complexity. Positions 228 to 241 (GPPPPPPGPPPPPI) are enriched in pro residues. Lys-286 bears the N6-methyllysine mark. A phosphoserine mark is found at Ser-289, Ser-294, and Ser-300. A compositionally biased stretch (pro residues) spans 299-311 (FSAPKPQTSPSPK). Residue Thr-306 is modified to Phosphothreonine. 2 positions are modified to phosphoserine: Ser-307 and Ser-309. The C-CAP/cofactor C-like domain maps to 312–452 (PATKKEPALL…EGGDFNEFPV (141 aa)). Lys-347 participates in a covalent cross-link: Glycyl lysine isopeptide (Lys-Gly) (interchain with G-Cter in SUMO1).

Belongs to the CAP family. Homodimer. Binds actin monomers. Ubiquitous.

The protein localises to the cell membrane. Its function is as follows. Directly regulates filament dynamics and has been implicated in a number of complex developmental and morphological processes, including mRNA localization and the establishment of cell polarity. The chain is Adenylyl cyclase-associated protein 1 (Cap1) from Mus musculus (Mouse).